The chain runs to 533 residues: 2,3-bisphosphoglycerate-independent phosphoglycerate mutase (533 aa).

Residues D15 and S65 each contribute to the Mn(2+) site. The active-site Phosphoserine intermediate is S65. Residues H126, 156–157, R188, R194, 258–261, and K331 contribute to the substrate site; these read RD and RPDR. Mn(2+) is bound by residues D398, H402, D439, H440, and H457.

Belongs to the BPG-independent phosphoglycerate mutase family. In terms of assembly, monomer. Mn(2+) serves as cofactor.

It carries out the reaction (2R)-2-phosphoglycerate = (2R)-3-phosphoglycerate. It functions in the pathway carbohydrate degradation; glycolysis; pyruvate from D-glyceraldehyde 3-phosphate: step 3/5. In terms of biological role, catalyzes the interconversion of 2-phosphoglycerate and 3-phosphoglycerate. The sequence is that of 2,3-bisphosphoglycerate-independent phosphoglycerate mutase from Nostoc sp. (strain PCC 7120 / SAG 25.82 / UTEX 2576).